A 216-amino-acid polypeptide reads, in one-letter code: Probable nicotinate-nucleotide adenylyltransferase (216 aa).

The protein belongs to the NadD family.

The enzyme catalyses nicotinate beta-D-ribonucleotide + ATP + H(+) = deamido-NAD(+) + diphosphate. It participates in cofactor biosynthesis; NAD(+) biosynthesis; deamido-NAD(+) from nicotinate D-ribonucleotide: step 1/1. In terms of biological role, catalyzes the reversible adenylation of nicotinate mononucleotide (NaMN) to nicotinic acid adenine dinucleotide (NaAD). The polypeptide is Probable nicotinate-nucleotide adenylyltransferase (Klebsiella pneumoniae (strain 342)).